Reading from the N-terminus, the 347-residue chain is tRNA N6-adenosine threonylcarbamoyltransferase (347 aa).

Residues H111 and H115 each coordinate Fe cation. Substrate contacts are provided by residues 134–138 (LVSGG), D167, G180, and N277. Residue D305 participates in Fe cation binding.

The protein belongs to the KAE1 / TsaD family. The cofactor is Fe(2+).

It localises to the cytoplasm. The enzyme catalyses L-threonylcarbamoyladenylate + adenosine(37) in tRNA = N(6)-L-threonylcarbamoyladenosine(37) in tRNA + AMP + H(+). Its function is as follows. Required for the formation of a threonylcarbamoyl group on adenosine at position 37 (t(6)A37) in tRNAs that read codons beginning with adenine. Is involved in the transfer of the threonylcarbamoyl moiety of threonylcarbamoyl-AMP (TC-AMP) to the N6 group of A37, together with TsaE and TsaB. TsaD likely plays a direct catalytic role in this reaction. This chain is tRNA N6-adenosine threonylcarbamoyltransferase, found in Ralstonia pickettii (strain 12J).